A 361-amino-acid polypeptide reads, in one-letter code: Polygalacturonase (361 aa).

Residues 1–18 (MISANSLLISTLCAFAIA) form the signal peptide. C27 and C43 are joined by a disulfide. PbH1 repeat units follow at residues 155–185 (CSDLTISDITIDIRDGDSAGGHNTDGFDVGS), 186–207 (SSNVLIQGCTVYNQDDCIAVNS), 208–228 (GSTIKFMNNYCYNGHGISVGS), 237–258 (VNGFWAENNHVINSDNGLRIKT), and 266–288 (VTNVNFISNKISGIKSYGIVIEG). Catalysis depends on D200, which acts as the Proton donor. An intrachain disulfide couples C202 to C218. H222 is a catalytic residue. N-linked (GlcNAc...) asparagine glycosylation is found at N318 and N330. Cysteines 350 and 361 form a disulfide.

Belongs to the glycosyl hydrolase 28 family.

It catalyses the reaction (1,4-alpha-D-galacturonosyl)n+m + H2O = (1,4-alpha-D-galacturonosyl)n + (1,4-alpha-D-galacturonosyl)m.. In Saccharomyces cerevisiae (strain ATCC 204508 / S288c) (Baker's yeast), this protein is Polygalacturonase (PGU1).